The primary structure comprises 209 residues: T-cell surface glycoprotein CD8 beta chain (209 aa).

Residues 1–21 (MRPRMWLLLSAQLAALHGNSV) form the signal peptide. An Ig-like V-type domain is found at 22–131 (LQQTPAYIMV…TLIFGTGTQL (110 aa)). Topologically, residues 22–169 (LQQTPAYIMV…ETRKGPLCSP (148 aa)) are extracellular. C41 and C115 are disulfide-bonded. An N-linked (GlcNAc...) asparagine glycan is attached at N101. A helical transmembrane segment spans residues 170 to 190 (ITLSLLVAGILVLLVSLGVAI). Over 191–209 (HLYCRQRRARLRFMKQFYK) the chain is Cytoplasmic.

In terms of assembly, forms disulfide-linked heterodimers with CD8A at the cell surface. Interacts with CD3D; this interaction couples TCR-CD3 with CD8. Interacts with LCK. In terms of processing, phosphorylated as a consequence of T-cell activation. Palmitoylated at the cytoplasmic tail and thereby targets the heterodimer CD8A/CD8B to lipid rafts unlike CD8A homodimers.

It is found in the cell membrane. Functionally, integral membrane glycoprotein that plays an essential role in the immune response and serves multiple functions in responses against both external and internal offenses. In T-cells, functions primarily as a coreceptor for MHC class I molecule:peptide complex. The antigens presented by class I peptides are derived from cytosolic proteins while class II derived from extracellular proteins. Interacts simultaneously with the T-cell receptor (TCR) and the MHC class I proteins presented by antigen presenting cells (APCs). In turn, recruits the Src kinase LCK to the vicinity of the TCR-CD3 complex. A palmitoylation site in the cytoplasmic tail of CD8B chain contributes to partitioning of CD8 into the plasma membrane lipid rafts where signaling proteins are enriched. Once LCK recruited, it initiates different intracellular signaling pathways by phosphorylating various substrates ultimately leading to lymphokine production, motility, adhesion and activation of cytotoxic T-lymphocytes (CTLs). Additionally, plays a critical role in thymic selection of CD8+ T-cells. The polypeptide is T-cell surface glycoprotein CD8 beta chain (CD8B) (Saimiri sciureus (Common squirrel monkey)).